A 273-amino-acid polypeptide reads, in one-letter code: 3-methyl-2-oxobutanoate hydroxymethyltransferase (273 aa).

2 residues coordinate Mg(2+): Asp-53 and Asp-92. Residues 53–54 (DS), Asp-92, and Lys-122 each bind 3-methyl-2-oxobutanoate. Mg(2+) is bound at residue Glu-124. Glu-191 functions as the Proton acceptor in the catalytic mechanism.

This sequence belongs to the PanB family. In terms of assembly, homodecamer; pentamer of dimers. It depends on Mg(2+) as a cofactor.

Its subcellular location is the cytoplasm. It carries out the reaction 3-methyl-2-oxobutanoate + (6R)-5,10-methylene-5,6,7,8-tetrahydrofolate + H2O = 2-dehydropantoate + (6S)-5,6,7,8-tetrahydrofolate. It participates in cofactor biosynthesis; (R)-pantothenate biosynthesis; (R)-pantoate from 3-methyl-2-oxobutanoate: step 1/2. Catalyzes the reversible reaction in which hydroxymethyl group from 5,10-methylenetetrahydrofolate is transferred onto alpha-ketoisovalerate to form ketopantoate. The polypeptide is 3-methyl-2-oxobutanoate hydroxymethyltransferase (Parabacteroides distasonis (strain ATCC 8503 / DSM 20701 / CIP 104284 / JCM 5825 / NCTC 11152)).